The following is a 406-amino-acid chain: COP9 signalosome complex subunit 4 (406 aa).

Ala2 carries the post-translational modification N-acetylalanine. The residue at position 25 (Lys25) is an N6-acetyllysine. The 170-residue stretch at 197–366 (YRRKFIEAAQ…GIVHFETREA (170 aa)) folds into the PCI domain.

This sequence belongs to the CSN4 family. In terms of assembly, component of the CSN complex, composed of COPS1/GPS1, COPS2, COPS3, COPS4, COPS5, COPS6, COPS7 (COPS7A or COPS7B), COPS8 and COPS9. In the complex, it probably interacts directly with COPS1, COPS2, COPS3, COPS5, COPS6, COPS7 (COPS7A or COPS7B) and COPS8. Interacts with TOR1A; the interaction is direct and associates TOR1A and SNAPIN with the CSN complex. Interacts with STON2; controls STON2 neddylation levels. Interacts with ERCC6.

It is found in the cytoplasm. The protein localises to the nucleus. Its subcellular location is the cytoplasmic vesicle. It localises to the secretory vesicle. The protein resides in the synaptic vesicle. Functionally, component of the COP9 signalosome complex (CSN), a complex involved in various cellular and developmental processes. The CSN complex is an essential regulator of the ubiquitin (Ubl) conjugation pathway by mediating the deneddylation of the cullin subunits of SCF-type E3 ligase complexes, leading to decrease the Ubl ligase activity of SCF-type complexes such as SCF, CSA or DDB2. Also involved in the deneddylation of non-cullin subunits such as STON2. The complex is also involved in phosphorylation of p53/TP53, c-jun/JUN, IkappaBalpha/NFKBIA, ITPK1, IRF8/ICSBP and SNAPIN, possibly via its association with CK2 and PKD kinases. CSN-dependent phosphorylation of TP53 and JUN promotes and protects degradation by the Ubl system, respectively. The protein is COP9 signalosome complex subunit 4 (Cops4) of Mus musculus (Mouse).